The sequence spans 34 residues: Photosystem II reaction center protein Y (34 aa).

Topologically, residues 1-5 are lumenal; sequence DWRVL. A helical transmembrane segment spans residues 6–22; sequence VVLLPVLLAAGWAVRNI. Residues 23–34 lie on the Cytoplasmic side of the membrane; the sequence is LPYAVKQVQKLL.

It belongs to the PsbY family. PSII is composed of 1 copy each of membrane proteins PsbA, PsbB, PsbC, PsbD, PsbE, PsbF, PsbH, PsbI, PsbJ, PsbK, PsbL, PsbM, PsbT, PsbX, PsbY, PsbZ, Psb30/Ycf12, peripheral proteins PsbO, CyanoQ (PsbQ), PsbU, PsbV and a large number of cofactors. It forms dimeric complexes. This protein is only loosely associated with PSII, and is not often found in crystals. It depends on PSII binds multiple chlorophylls, carotenoids and specific lipids. as a cofactor.

The protein resides in the cellular thylakoid membrane. Its function is as follows. Loosely associated component of the core of photosystem II (PSII). PSII is a light-driven water plastoquinone oxidoreductase, using light energy to abstract electrons from H(2)O, generating a proton gradient subsequently used for ATP formation. This chain is Photosystem II reaction center protein Y, found in Thermostichus vulcanus (Synechococcus vulcanus).